Consider the following 249-residue polypeptide: Ubiquinone biosynthesis O-methyltransferase (249 aa).

S-adenosyl-L-methionine-binding residues include arginine 41, glycine 72, aspartate 93, and methionine 136.

It belongs to the methyltransferase superfamily. UbiG/COQ3 family.

The catalysed reaction is a 3-demethylubiquinol + S-adenosyl-L-methionine = a ubiquinol + S-adenosyl-L-homocysteine + H(+). It carries out the reaction a 3-(all-trans-polyprenyl)benzene-1,2-diol + S-adenosyl-L-methionine = a 2-methoxy-6-(all-trans-polyprenyl)phenol + S-adenosyl-L-homocysteine + H(+). The protein operates within cofactor biosynthesis; ubiquinone biosynthesis. Its function is as follows. O-methyltransferase that catalyzes the 2 O-methylation steps in the ubiquinone biosynthetic pathway. The sequence is that of Ubiquinone biosynthesis O-methyltransferase from Methylobacterium nodulans (strain LMG 21967 / CNCM I-2342 / ORS 2060).